We begin with the raw amino-acid sequence, 765 residues long: LPS-assembly protein LptD (765 aa).

The signal sequence occupies residues 1 to 18; sequence MQIRYFLALSLLPQLVLA.

Belongs to the LptD family. As to quaternary structure, component of the lipopolysaccharide transport and assembly complex. Interacts with LptE and LptA.

It is found in the cell outer membrane. Together with LptE, is involved in the assembly of lipopolysaccharide (LPS) at the surface of the outer membrane. The sequence is that of LPS-assembly protein LptD from Shewanella sp. (strain MR-4).